Here is a 69-residue protein sequence, read N- to C-terminus: ATP synthase protein 8 (69 aa).

Residues 8–24 (TWTLTISLMIISLFCIY) traverse the membrane as a helical segment. N6-acetyllysine; alternate is present on Lys55. N6-succinyllysine; alternate is present on Lys55. Lys58 carries the post-translational modification N6-acetyllysine.

Belongs to the ATPase protein 8 family. In terms of assembly, F-type ATPases have 2 components, CF(1) - the catalytic core - and CF(0) - the membrane proton channel. Component of an ATP synthase complex composed of ATP5PB, ATP5MC1, ATP5F1E, ATP5PD, ATP5ME, ATP5PF, ATP5MF, MT-ATP6, MT-ATP8, ATP5F1A, ATP5F1B, ATP5F1D, ATP5F1C, ATP5PO, ATP5MG, ATP5MK and ATP5MJ. Interacts with PRICKLE3.

Its subcellular location is the mitochondrion membrane. In terms of biological role, mitochondrial membrane ATP synthase (F(1)F(0) ATP synthase or Complex V) produces ATP from ADP in the presence of a proton gradient across the membrane which is generated by electron transport complexes of the respiratory chain. F-type ATPases consist of two structural domains, F(1) - containing the extramembraneous catalytic core and F(0) - containing the membrane proton channel, linked together by a central stalk and a peripheral stalk. During catalysis, ATP synthesis in the catalytic domain of F(1) is coupled via a rotary mechanism of the central stalk subunits to proton translocation. Part of the complex F(0) domain. Minor subunit located with subunit a in the membrane. This is ATP synthase protein 8 (MT-ATP8) from Didelphis virginiana (North American opossum).